The chain runs to 238 residues: 4-hydroxy-tetrahydrodipicolinate reductase (238 aa).

NAD(+) is bound at residue 12–17 (GASGRM). R40 is a binding site for NADP(+). NAD(+) contacts are provided by residues 93–95 (GTT) and 117–120 (ASNF). The active-site Proton donor/acceptor is H149. (S)-2,3,4,5-tetrahydrodipicolinate is bound at residue H150. The active-site Proton donor is the K153. 159–160 (GT) is a binding site for (S)-2,3,4,5-tetrahydrodipicolinate.

It belongs to the DapB family.

The protein resides in the cytoplasm. The catalysed reaction is (S)-2,3,4,5-tetrahydrodipicolinate + NAD(+) + H2O = (2S,4S)-4-hydroxy-2,3,4,5-tetrahydrodipicolinate + NADH + H(+). It carries out the reaction (S)-2,3,4,5-tetrahydrodipicolinate + NADP(+) + H2O = (2S,4S)-4-hydroxy-2,3,4,5-tetrahydrodipicolinate + NADPH + H(+). The protein operates within amino-acid biosynthesis; L-lysine biosynthesis via DAP pathway; (S)-tetrahydrodipicolinate from L-aspartate: step 4/4. In terms of biological role, catalyzes the conversion of 4-hydroxy-tetrahydrodipicolinate (HTPA) to tetrahydrodipicolinate. This chain is 4-hydroxy-tetrahydrodipicolinate reductase, found in Xanthomonas axonopodis pv. citri (strain 306).